The primary structure comprises 121 residues: ORF8 protein (121 aa).

Positions 1–15 are cleaved as a signal peptide; the sequence is MKFLVFLGIITTVAA. Residues 19–121 enclose the SARS ORF8 Ig-like domain; that stretch reads ECSLQSCTQH…HDVRVVLDFI (103 aa). Intrachain disulfides connect Cys25-Cys90, Cys37-Cys102, and Cys61-Cys83. Asn78 carries an N-linked (GlcNAc...) (complex) asparagine; by host glycan.

As to quaternary structure, homodimer. Interacts with host IL17RA. Interacts with host IL17RC. Interacts with host MHC-I. Glycosylated by the host when secreted via the conventional pathway. The glycosylated form cannot bind IL17A and would not participate in the cytokine storm.

It localises to the secreted. In terms of biological role, plays a role in modulating the host immune response. May act as a secreted virokine by mimicking interleukin-17A (IL17A), and thereby binding to the IL17RA receptor, leading to activation of the IL17 pathway and increased secretion of pro-inflammatory factors. Contributes to the cytokine storm during SARS-CoV-2 infection when secreted by unconventional pathway. May act by down-regulating major histocompability complex class I (MHC-I) at cell surface. May inhibit expression of some members of the IFN-stimulated gene (ISG) family including hosts IGF2BP1/ZBP1, MX1 and MX2, and DHX58. The protein is ORF8 protein of Severe acute respiratory syndrome coronavirus 2 (2019-nCoV).